Consider the following 303-residue polypeptide: tRNA pseudouridine synthase B (303 aa).

The active-site Nucleophile is Asp47.

It belongs to the pseudouridine synthase TruB family. Type 1 subfamily.

It carries out the reaction uridine(55) in tRNA = pseudouridine(55) in tRNA. In terms of biological role, responsible for synthesis of pseudouridine from uracil-55 in the psi GC loop of transfer RNAs. This is tRNA pseudouridine synthase B from Roseobacter denitrificans (strain ATCC 33942 / OCh 114) (Erythrobacter sp. (strain OCh 114)).